The sequence spans 494 residues: Probable cytochrome P450 313a4 (494 aa).

A heme-binding site is contributed by cysteine 440.

The protein belongs to the cytochrome P450 family. The cofactor is heme.

The protein resides in the endoplasmic reticulum membrane. It is found in the microsome membrane. Its function is as follows. May be involved in the metabolism of insect hormones and in the breakdown of synthetic insecticides. The protein is Probable cytochrome P450 313a4 (Cyp313a4) of Drosophila melanogaster (Fruit fly).